A 323-amino-acid polypeptide reads, in one-letter code: Acetyl-coenzyme A carboxylase carboxyl transferase subunit alpha 1 (323 aa).

In terms of domain architecture, CoA carboxyltransferase C-terminal spans 39-293; that stretch reads RLSKKSQQLT…RRALGDSLRQ (255 aa).

This sequence belongs to the AccA family. In terms of assembly, acetyl-CoA carboxylase is a heterohexamer composed of biotin carboxyl carrier protein (AccB), biotin carboxylase (AccC) and two subunits each of ACCase subunit alpha (AccA) and ACCase subunit beta (AccD).

The protein resides in the cytoplasm. The catalysed reaction is N(6)-carboxybiotinyl-L-lysyl-[protein] + acetyl-CoA = N(6)-biotinyl-L-lysyl-[protein] + malonyl-CoA. The protein operates within lipid metabolism; malonyl-CoA biosynthesis; malonyl-CoA from acetyl-CoA: step 1/1. Functionally, component of the acetyl coenzyme A carboxylase (ACC) complex. First, biotin carboxylase catalyzes the carboxylation of biotin on its carrier protein (BCCP) and then the CO(2) group is transferred by the carboxyltransferase to acetyl-CoA to form malonyl-CoA. In terms of biological role, does not confer resistance to the endogenous polyketide antibiotic thailandamide, does not confer resistance to thailandamide when expressed in S.typhimurium. The sequence is that of Acetyl-coenzyme A carboxylase carboxyl transferase subunit alpha 1 from Burkholderia thailandensis (strain ATCC 700388 / DSM 13276 / CCUG 48851 / CIP 106301 / E264).